We begin with the raw amino-acid sequence, 237 residues long: uncharacterized protein (237 aa).

The protein belongs to the bactofilin family.

This is an uncharacterized protein from Bacillus subtilis (strain 168).